A 389-amino-acid chain; its full sequence is Inner membrane transport protein YdhP (389 aa).

Over 1–6 the chain is Cytoplasmic; that stretch reads MKINYP. The chain crosses the membrane as a helical span at residues 7–27; that stretch reads LLALAIGAFGIGTTEFSPMGL. The Periplasmic portion of the chain corresponds to 28–43; that stretch reads LPVIARGVDVSIPAAG. Residues 44-64 form a helical membrane-spanning segment; the sequence is MLISAYAVGVMVGAPLMTLLL. Residues 65–70 lie on the Cytoplasmic side of the membrane; it reads SHRARR. The chain crosses the membrane as a helical span at residues 71-91; it reads SALIFLMAIFTLGNVLSAIAP. Residues 92–100 lie on the Periplasmic side of the membrane; the sequence is DYMTLMLSR. The helical transmembrane segment at 101–121 threads the bilayer; sequence ILTSLNHGAFFGLGSVVAASV. Topologically, residues 122 to 130 are cytoplasmic; that stretch reads VPKHKQASA. Residues 131 to 151 form a helical membrane-spanning segment; that stretch reads VATMFMGLTLANIGGVPAATW. Over 152-159 the chain is Periplasmic; sequence LGETIGWR. The chain crosses the membrane as a helical span at residues 160-180; the sequence is MSFLATAGLGVISMVSLFFSL. Over 181 to 203 the chain is Cytoplasmic; the sequence is PKGGAGARPEVKKELAVLMRPQV. Residues 204-224 traverse the membrane as a helical segment; that stretch reads LSALLTTVLGAGAMFTLYTYI. Topologically, residues 225–236 are periplasmic; the sequence is SPVLQSITHATP. A helical transmembrane segment spans residues 237–257; the sequence is VFVTAMLVLIGVGFSIGNYLG. The Cytoplasmic segment spans residues 258 to 266; it reads GKLADRSVN. The chain crosses the membrane as a helical span at residues 267 to 287; the sequence is GTLKGFLLLLMVIMLAIPFLA. Residues 288–290 are Periplasmic-facing; sequence RNK. A helical transmembrane segment spans residues 291-311; that stretch reads FGAAISMAVWGAATFAVVPPL. The Cytoplasmic portion of the chain corresponds to 312 to 330; it reads QMRVMRVASEAPGLSSSVN. A helical membrane pass occupies residues 331 to 351; the sequence is IGAFNLGNALGAAAGGAVISA. At 352–356 the chain is on the periplasmic side; the sequence is GLGYS. Residues 357-377 form a helical membrane-spanning segment; it reads FVPVMGAIVAGLALLLVFMSA. The Cytoplasmic portion of the chain corresponds to 378–389; sequence RKQPETVCVANS.

Belongs to the major facilitator superfamily.

It is found in the cell inner membrane. The protein is Inner membrane transport protein YdhP (ydhP) of Escherichia coli O157:H7.